The primary structure comprises 403 residues: Tryptophan synthase beta chain (403 aa).

Position 87 is an N6-(pyridoxal phosphate)lysine (K87).

It belongs to the TrpB family. Tetramer of two alpha and two beta chains. The cofactor is pyridoxal 5'-phosphate.

The catalysed reaction is (1S,2R)-1-C-(indol-3-yl)glycerol 3-phosphate + L-serine = D-glyceraldehyde 3-phosphate + L-tryptophan + H2O. The protein operates within amino-acid biosynthesis; L-tryptophan biosynthesis; L-tryptophan from chorismate: step 5/5. Its function is as follows. The beta subunit is responsible for the synthesis of L-tryptophan from indole and L-serine. This chain is Tryptophan synthase beta chain, found in Shewanella loihica (strain ATCC BAA-1088 / PV-4).